The sequence spans 353 residues: 3'-5' exonuclease (353 aa).

Positions 1 to 119 are disordered; sequence MEKYLTKMPI…PSPEKEKPEK (119 aa). 2 stretches are compositionally biased toward basic and acidic residues: residues 13-30 and 37-50; these read KANE…ETPK and KKDT…KENA. A compositionally biased stretch (basic residues) spans 59–70; it reads TKGRPGRPAAKR. Residues 71 to 90 are compositionally biased toward basic and acidic residues; that stretch reads KNLDTPDVTEKLAMEEENPP. 3 positions are modified to phosphoserine: S103, S109, and S111. In terms of domain architecture, 3'-5' exonuclease spans 145–313; the sequence is VLQWVEKQKD…GQVIYRELER (169 aa). D162, E164, and D300 together coordinate Mg(2+).

The protein belongs to the WRNexo family.

It localises to the nucleus. Functionally, has exonuclease activity on both single-stranded and duplex templates bearing overhangs, but not blunt ended duplex DNA, and cleaves in a 3'-5' direction. Essential for the formation of DNA replication focal centers. Has an important role in maintaining genome stability. In Drosophila melanogaster (Fruit fly), this protein is 3'-5' exonuclease.